The primary structure comprises 312 residues: Olfactory receptor 5J2 (312 aa).

The Extracellular segment spans residues 1–25 (MADDNFTVVTEFILLGLTDHAELKA). Asparagine 5 is a glycosylation site (N-linked (GlcNAc...) asparagine). A helical membrane pass occupies residues 26–46 (VLFVVFLVIYAITLLRNLGMI). At 47-54 (LLIQITSK) the chain is on the cytoplasmic side. The chain crosses the membrane as a helical span at residues 55-75 (LHTPMYFLLSCLSFVDACYSS). Residues 76–99 (AIAPKMLVNLLVVKATISFSACMV) are Extracellular-facing. Cysteine 97 and cysteine 189 are disulfide-bonded. Residues 100-120 (QHLCFGVFITTEGFLLSVMAY) form a helical membrane-spanning segment. The Cytoplasmic segment spans residues 121 to 139 (DRYVAIVSPLLYTVAMSDR). A helical transmembrane segment spans residues 140 to 160 (KCVELVTGSWIGGIVNTLIHT). At 161-196 (ISLRRLSFCRLNAVSHFFCDIPSLLKLSCSDTSMNE) the chain is on the extracellular side. The helical transmembrane segment at 197–217 (LLLLTFSGVIAMATFLTVIIS) threads the bilayer. Over 218 to 237 (YIFIAFASLRIHSASGRQQA) the chain is Cytoplasmic. Residues 238–258 (FSTCASHLTAVTIFYGTLIFS) traverse the membrane as a helical segment. Residues 259–271 (YIQPSSQYFVEQE) lie on the Extracellular side of the membrane. The helical transmembrane segment at 272–292 (KVVSMFYTLGIPMLNLLIHSL) threads the bilayer. Residues 293-312 (RNKDVKEAVKRAIEMKHFLC) lie on the Cytoplasmic side of the membrane.

This sequence belongs to the G-protein coupled receptor 1 family.

Its subcellular location is the cell membrane. Functionally, odorant receptor. The chain is Olfactory receptor 5J2 (OR5J2) from Homo sapiens (Human).